Here is a 94-residue protein sequence, read N- to C-terminus: Large ribosomal subunit protein bL25 (94 aa).

The protein belongs to the bacterial ribosomal protein bL25 family. Part of the 50S ribosomal subunit; part of the 5S rRNA/L5/L18/L25 subcomplex. Contacts the 5S rRNA. Binds to the 5S rRNA independently of L5 and L18.

In terms of biological role, this is one of the proteins that binds to the 5S RNA in the ribosome where it forms part of the central protuberance. In Klebsiella pneumoniae subsp. pneumoniae (strain ATCC 700721 / MGH 78578), this protein is Large ribosomal subunit protein bL25.